We begin with the raw amino-acid sequence, 216 residues long: tRNA (guanine-N(7)-)-methyltransferase (216 aa).

The S-adenosyl-L-methionine site is built by Glu-43, Asp-68, Asn-95, and Asn-117. Residues Asp-153 and 190–193 (TEYE) each bind substrate.

This sequence belongs to the class I-like SAM-binding methyltransferase superfamily. TrmB family.

It catalyses the reaction guanosine(46) in tRNA + S-adenosyl-L-methionine = N(7)-methylguanosine(46) in tRNA + S-adenosyl-L-homocysteine. It functions in the pathway tRNA modification; N(7)-methylguanine-tRNA biosynthesis. Functionally, catalyzes the formation of N(7)-methylguanine at position 46 (m7G46) in tRNA. This Desulfitobacterium hafniense (strain Y51) protein is tRNA (guanine-N(7)-)-methyltransferase.